The sequence spans 161 residues: Photosystem I reaction center subunit XI (161 aa).

The next 2 membrane-spanning stretches (helical) occupy residues 84–104 (LIST…YGLV) and 126–146 (FTGG…FLLE).

Belongs to the PsaL family.

The protein resides in the cellular thylakoid membrane. The protein is Photosystem I reaction center subunit XI of Trichodesmium erythraeum (strain IMS101).